Consider the following 323-residue polypeptide: Lipoyl synthase (323 aa).

Cysteine 56, cysteine 61, cysteine 67, cysteine 82, cysteine 86, cysteine 89, and serine 293 together coordinate [4Fe-4S] cluster. The region spanning 68-282 (WEDREATFLI…AAEARELGFA (215 aa)) is the Radical SAM core domain.

This sequence belongs to the radical SAM superfamily. Lipoyl synthase family. It depends on [4Fe-4S] cluster as a cofactor.

The protein localises to the cytoplasm. It catalyses the reaction [[Fe-S] cluster scaffold protein carrying a second [4Fe-4S](2+) cluster] + N(6)-octanoyl-L-lysyl-[protein] + 2 oxidized [2Fe-2S]-[ferredoxin] + 2 S-adenosyl-L-methionine + 4 H(+) = [[Fe-S] cluster scaffold protein] + N(6)-[(R)-dihydrolipoyl]-L-lysyl-[protein] + 4 Fe(3+) + 2 hydrogen sulfide + 2 5'-deoxyadenosine + 2 L-methionine + 2 reduced [2Fe-2S]-[ferredoxin]. The protein operates within protein modification; protein lipoylation via endogenous pathway; protein N(6)-(lipoyl)lysine from octanoyl-[acyl-carrier-protein]: step 2/2. Catalyzes the radical-mediated insertion of two sulfur atoms into the C-6 and C-8 positions of the octanoyl moiety bound to the lipoyl domains of lipoate-dependent enzymes, thereby converting the octanoylated domains into lipoylated derivatives. The polypeptide is Lipoyl synthase (Acidothermus cellulolyticus (strain ATCC 43068 / DSM 8971 / 11B)).